Consider the following 109-residue polypeptide: Set1 complex component sdc1 (109 aa).

The disordered stretch occupies residues 49-109 (QQKQKEIVNQ…SSNPGKNSAS (61 aa)). Residues 73 to 87 (STPTMAEQVQTSFSN) are compositionally biased toward polar residues. A compositionally biased stretch (low complexity) spans 88–101 (PASTPLTQTSSPSS).

The protein belongs to the dpy-30 family. Component of the COMPASS (Set1C) complex composed of ash2, sdc1, set1, shg1, spp1, swd1, swd2 and swd3. Component of the Lid2 complex composed of ash2, jmj3, lid2, sdc1 and snt2.

It is found in the nucleus. Its function is as follows. The COMPASS (Set1C) complex specifically mono-, di- and trimethylates histone H3 to form H3K4me1/2/3, which subsequently activates gene expression by regulating transcription elongation and plays a role in telomere length maintenance. The chain is Set1 complex component sdc1 (sdc1) from Schizosaccharomyces pombe (strain 972 / ATCC 24843) (Fission yeast).